A 93-amino-acid chain; its full sequence is Small ribosomal subunit protein uS19 (93 aa).

The protein belongs to the universal ribosomal protein uS19 family.

Its function is as follows. Protein S19 forms a complex with S13 that binds strongly to the 16S ribosomal RNA. The chain is Small ribosomal subunit protein uS19 from Oenococcus oeni (strain ATCC BAA-331 / PSU-1).